A 368-amino-acid polypeptide reads, in one-letter code: Polynucleotide 5'-hydroxyl-kinase NOL9 (368 aa).

Residue 36–43 (GPKNSGKS) participates in ATP binding.

Belongs to the Clp1 family. NOL9/GRC3 subfamily.

It localises to the nucleus. Its subcellular location is the nucleolus. Functionally, polynucleotide 5'-kinase involved in rRNA processing. The sequence is that of Polynucleotide 5'-hydroxyl-kinase NOL9 from Arabidopsis thaliana (Mouse-ear cress).